The sequence spans 202 residues: uncharacterized protein (202 aa).

The interval 1–20 is disordered; the sequence is MVGAVTQIADRPTDPSPWSP. Residues 19–79 form the HTH tetR-type domain; sequence SPRETELLAV…AAFIEGIRQV (61 aa).

This is an uncharacterized protein from Mycobacterium bovis (strain ATCC BAA-935 / AF2122/97).